Reading from the N-terminus, the 185-residue chain is Sulfopyruvate decarboxylase subunit beta (185 aa).

Belongs to the TPP enzyme family. In terms of assembly, heterododecamer composed of 6 subunits alpha and 6 subunits beta. Requires thiamine diphosphate as cofactor.

It carries out the reaction 3-sulfopyruvate + H(+) = sulfoacetaldehyde + CO2. It functions in the pathway cofactor biosynthesis; coenzyme M biosynthesis; sulfoacetaldehyde from phosphoenolpyruvate and sulfite: step 4/4. Involved in the biosynthesis of the coenzyme M (2-mercaptoethanesulfonic acid). Catalyzes the decarboxylation of sulfopyruvate to sulfoacetaldehyde. The polypeptide is Sulfopyruvate decarboxylase subunit beta (Methanococcus maripaludis (strain DSM 14266 / JCM 13030 / NBRC 101832 / S2 / LL)).